The primary structure comprises 450 residues: Trigger factor (450 aa).

In terms of domain architecture, PPIase FKBP-type spans 163-249 (EDFVLIDYQG…LKEIQEQILP (87 aa)). A compositionally biased stretch (acidic residues) spans 431–443 (PEVETEVSESAAD). Residues 431–450 (PEVETEVSESAADVEDKTDQ) are disordered.

This sequence belongs to the FKBP-type PPIase family. Tig subfamily.

It localises to the cytoplasm. The catalysed reaction is [protein]-peptidylproline (omega=180) = [protein]-peptidylproline (omega=0). Functionally, involved in protein export. Acts as a chaperone by maintaining the newly synthesized protein in an open conformation. Functions as a peptidyl-prolyl cis-trans isomerase. This chain is Trigger factor, found in Desulforapulum autotrophicum (strain ATCC 43914 / DSM 3382 / VKM B-1955 / HRM2) (Desulfobacterium autotrophicum).